A 706-amino-acid polypeptide reads, in one-letter code: UvrABC system protein C (706 aa).

In terms of domain architecture, GIY-YIG spans 16-95 (VEPGVYRFRD…IKEFDPRFNV (80 aa)). One can recognise a UVR domain in the interval 208-243 (DRLAKDMEQQMTAAAEQLDFERAARLRDDISALKRA). The interval 651–706 (APQNGTAPDPAPGTGDPQTPADPHSAATAADIEDDRHATGATGPQMNGSEQQVDRV) is disordered. Over residues 692–706 (TGPQMNGSEQQVDRV) the composition is skewed to polar residues.

It belongs to the UvrC family. In terms of assembly, interacts with UvrB in an incision complex.

The protein localises to the cytoplasm. Its function is as follows. The UvrABC repair system catalyzes the recognition and processing of DNA lesions. UvrC both incises the 5' and 3' sides of the lesion. The N-terminal half is responsible for the 3' incision and the C-terminal half is responsible for the 5' incision. This Mycolicibacterium smegmatis (strain ATCC 700084 / mc(2)155) (Mycobacterium smegmatis) protein is UvrABC system protein C.